A 348-amino-acid polypeptide reads, in one-letter code: Protein RecA (348 aa).

An ATP-binding site is contributed by 64–71; it reads GPESSGKT. Residues 325–335 show a composition bias toward basic and acidic residues; sequence YEIDGSSKEPL. The disordered stretch occupies residues 325-348; that stretch reads YEIDGSSKEPLDEKEETLSLLDDE.

This sequence belongs to the RecA family.

The protein localises to the cytoplasm. Can catalyze the hydrolysis of ATP in the presence of single-stranded DNA, the ATP-dependent uptake of single-stranded DNA by duplex DNA, and the ATP-dependent hybridization of homologous single-stranded DNAs. It interacts with LexA causing its activation and leading to its autocatalytic cleavage. The chain is Protein RecA from Listeria monocytogenes serotype 1/2a (strain 10403S).